A 157-amino-acid polypeptide reads, in one-letter code: 6,7-dimethyl-8-ribityllumazine synthase (157 aa).

5-amino-6-(D-ribitylamino)uracil is bound by residues F22, 57 to 59 (AYE), and 81 to 83 (TVI). 86–87 (GT) provides a ligand contact to (2S)-2-hydroxy-3-oxobutyl phosphate. The active-site Proton donor is the H89. Position 114 (F114) interacts with 5-amino-6-(D-ribitylamino)uracil. R128 provides a ligand contact to (2S)-2-hydroxy-3-oxobutyl phosphate.

This sequence belongs to the DMRL synthase family. Forms an icosahedral capsid composed of 60 subunits, arranged as a dodecamer of pentamers.

The catalysed reaction is (2S)-2-hydroxy-3-oxobutyl phosphate + 5-amino-6-(D-ribitylamino)uracil = 6,7-dimethyl-8-(1-D-ribityl)lumazine + phosphate + 2 H2O + H(+). It participates in cofactor biosynthesis; riboflavin biosynthesis; riboflavin from 2-hydroxy-3-oxobutyl phosphate and 5-amino-6-(D-ribitylamino)uracil: step 1/2. Functionally, catalyzes the formation of 6,7-dimethyl-8-ribityllumazine by condensation of 5-amino-6-(D-ribitylamino)uracil with 3,4-dihydroxy-2-butanone 4-phosphate. This is the penultimate step in the biosynthesis of riboflavin. The polypeptide is 6,7-dimethyl-8-ribityllumazine synthase (Haemophilus influenzae (strain ATCC 51907 / DSM 11121 / KW20 / Rd)).